The primary structure comprises 92 residues: Small ribosomal subunit protein uS17 (92 aa).

The protein belongs to the universal ribosomal protein uS17 family. In terms of assembly, part of the 30S ribosomal subunit.

In terms of biological role, one of the primary rRNA binding proteins, it binds specifically to the 5'-end of 16S ribosomal RNA. The chain is Small ribosomal subunit protein uS17 from Corynebacterium urealyticum (strain ATCC 43042 / DSM 7109).